Consider the following 442-residue polypeptide: ATP-dependent protease ATPase subunit HslU (442 aa).

ATP contacts are provided by residues Ile18, 60–65 (GVGKTE), Asp255, Glu320, and Arg392.

It belongs to the ClpX chaperone family. HslU subfamily. In terms of assembly, a double ring-shaped homohexamer of HslV is capped on each side by a ring-shaped HslU homohexamer. The assembly of the HslU/HslV complex is dependent on binding of ATP.

The protein resides in the cytoplasm. ATPase subunit of a proteasome-like degradation complex; this subunit has chaperone activity. The binding of ATP and its subsequent hydrolysis by HslU are essential for unfolding of protein substrates subsequently hydrolyzed by HslV. HslU recognizes the N-terminal part of its protein substrates and unfolds these before they are guided to HslV for hydrolysis. The protein is ATP-dependent protease ATPase subunit HslU of Shewanella putrefaciens (strain CN-32 / ATCC BAA-453).